The following is a 104-amino-acid chain: Zinc-containing ferredoxin-2 (104 aa).

The interval 2 to 37 (GIDPNYRQNRQVVGEHEGHKIYGPVEPPGKLGIHGT) is N-terminal extension. Residues His17, His20, and His35 each contribute to the Zn(2+) site. 4Fe-4S ferredoxin-type domains lie at 38-66 (IVGV…WFDT) and 75-104 (KADP…VKPP). The [3Fe-4S] cluster site is built by Cys46 and Cys52. Cys56 is a [4Fe-4S] cluster binding site. Asp77 contributes to the Zn(2+) binding site. [4Fe-4S] cluster-binding residues include Cys84, Cys87, and Cys90. Cys94 contacts [3Fe-4S] cluster.

[3Fe-4S] cluster serves as cofactor. Requires [4Fe-4S] cluster as cofactor. It depends on Zn(2+) as a cofactor.

In terms of biological role, ferredoxins are iron-sulfur proteins that transfer electrons in a wide variety of metabolic reactions. The sequence is that of Zinc-containing ferredoxin-2 (zfx2) from Sulfurisphaera tokodaii (strain DSM 16993 / JCM 10545 / NBRC 100140 / 7) (Sulfolobus tokodaii).